A 447-amino-acid polypeptide reads, in one-letter code: Glycogen synthase (447 aa).

ADP-alpha-D-glucose is bound at residue Arg15.

Belongs to the glycosyltransferase 1 family. Bacterial/plant glycogen synthase subfamily.

It catalyses the reaction [(1-&gt;4)-alpha-D-glucosyl](n) + ADP-alpha-D-glucose = [(1-&gt;4)-alpha-D-glucosyl](n+1) + ADP + H(+). It functions in the pathway glycan biosynthesis; glycogen biosynthesis. In terms of biological role, synthesizes alpha-1,4-glucan chains using ADP-glucose. This is Glycogen synthase from Deinococcus geothermalis (strain DSM 11300 / CIP 105573 / AG-3a).